Here is a 105-residue protein sequence, read N- to C-terminus: Heme oxygenase (mycobilin-producing) (105 aa).

One can recognise an ABM domain in the interval valine 3–phenylalanine 92. Heme is bound by residues arginine 22–arginine 26, histidine 75, and valine 83–glycine 86.

This sequence belongs to the antibiotic biosynthesis monooxygenase family. Homodimer.

It catalyses the reaction heme b + 3 AH2 + 3 O2 + 2 H(+) = mycobilin a + Fe(2+) + 3 A + 3 H2O. It carries out the reaction heme b + 3 AH2 + 3 O2 + 2 H(+) = mycobilin b + Fe(2+) + 3 A + 3 H2O. In terms of biological role, catalyzes the oxidative degradation of the heme macrocyclic porphyrin ring in the presence of a suitable electron donor such as ascorbate or NADPH--cytochrome P450 reductase, with subsequent release of free iron. The sequence is that of Heme oxygenase (mycobilin-producing) (mhuD) from Mycobacterium tuberculosis (strain CDC 1551 / Oshkosh).